A 127-amino-acid chain; its full sequence is Large ribosomal subunit protein bL20 (127 aa).

This sequence belongs to the bacterial ribosomal protein bL20 family.

Binds directly to 23S ribosomal RNA and is necessary for the in vitro assembly process of the 50S ribosomal subunit. It is not involved in the protein synthesizing functions of that subunit. The chain is Large ribosomal subunit protein bL20 from Akkermansia muciniphila (strain ATCC BAA-835 / DSM 22959 / JCM 33894 / BCRC 81048 / CCUG 64013 / CIP 107961 / Muc).